We begin with the raw amino-acid sequence, 396 residues long: Phosphopentomutase (396 aa).

The Mn(2+) site is built by Asp-14, Asp-286, His-291, Asp-327, His-328, and His-339.

The protein belongs to the phosphopentomutase family. Mn(2+) is required as a cofactor.

The protein resides in the cytoplasm. The catalysed reaction is 2-deoxy-alpha-D-ribose 1-phosphate = 2-deoxy-D-ribose 5-phosphate. It catalyses the reaction alpha-D-ribose 1-phosphate = D-ribose 5-phosphate. It functions in the pathway carbohydrate degradation; 2-deoxy-D-ribose 1-phosphate degradation; D-glyceraldehyde 3-phosphate and acetaldehyde from 2-deoxy-alpha-D-ribose 1-phosphate: step 1/2. In terms of biological role, isomerase that catalyzes the conversion of deoxy-ribose 1-phosphate (dRib-1-P) and ribose 1-phosphate (Rib-1-P) to deoxy-ribose 5-phosphate (dRib-5-P) and ribose 5-phosphate (Rib-5-P), respectively. This is Phosphopentomutase from Staphylococcus epidermidis (strain ATCC 35984 / DSM 28319 / BCRC 17069 / CCUG 31568 / BM 3577 / RP62A).